The chain runs to 160 residues: Cyanate hydratase (160 aa).

Residues R100, E103, and S126 contribute to the active site.

This sequence belongs to the cyanase family.

The enzyme catalyses cyanate + hydrogencarbonate + 3 H(+) = NH4(+) + 2 CO2. Catalyzes the reaction of cyanate with bicarbonate to produce ammonia and carbon dioxide. This Emericella nidulans (strain FGSC A4 / ATCC 38163 / CBS 112.46 / NRRL 194 / M139) (Aspergillus nidulans) protein is Cyanate hydratase.